Here is a 130-residue protein sequence, read N- to C-terminus: Small ribosomal subunit protein uS11 (130 aa).

Belongs to the universal ribosomal protein uS11 family. As to quaternary structure, part of the 30S ribosomal subunit. Interacts with proteins S7 and S18. Binds to IF-3.

In terms of biological role, located on the platform of the 30S subunit, it bridges several disparate RNA helices of the 16S rRNA. Forms part of the Shine-Dalgarno cleft in the 70S ribosome. In Borreliella afzelii (strain PKo) (Borrelia afzelii), this protein is Small ribosomal subunit protein uS11.